The primary structure comprises 513 residues: Protein indeterminate-domain 11 (513 aa).

The tract at residues 1 to 84 (MMNKDMLLHQ…QPGNPDPESE (84 aa)) is disordered. The span at 10-45 (QHQQPQQDENMSNLTSASGDQASVSSGNITEASGSN) shows a compositional bias: polar residues. Low complexity predominate over residues 51 to 60 (QQQQEQQQQQ). Ser89 carries the phosphoserine modification. C2H2-type zinc fingers lie at residues 99-121 (FVCE…RRGH) and 141-171 (YVCP…CRKH). The short motif at 163 to 170 (IKKHFCRK) is the Nuclear localization signal element. The C2H2-type 2; degenerate zinc-finger motif lies at 176–199 (WKCDKCSKKYAVQSDCKAHSKTCG). Zn(2+)-binding residues include Cys178, Cys181, His194, Cys198, Cys205, Cys207, His220, and Cys224. A CCHC-type 2; atypical zinc finger spans residues 203–226 (YRCDCGTLFSRRDSFITHRAFCEA). The SHR-binding stretch occupies residues 213-225 (RRDSFITHRAFCE). 2 disordered regions span residues 255 to 280 (ASHP…SHNH) and 334 to 358 (PQPH…SLFS). Low complexity predominate over residues 264 to 280 (TQPTINVSSSSSSSHNH).

The protein localises to the nucleus. Probable transcription factor. The polypeptide is Protein indeterminate-domain 11 (Arabidopsis thaliana (Mouse-ear cress)).